We begin with the raw amino-acid sequence, 190 residues long: Selenoprotein S (190 aa).

A compositionally biased stretch (basic and acidic residues) spans 1-13 (MEAEDGARVRNED). A disordered region spans residues 1–20 (MEAEDGARVRNEDVPPQNQD). The helical transmembrane segment at 30–50 (AFMSEYGWYLLFGCVGVYLLI) threads the bilayer. A compositionally biased stretch (low complexity) spans 58 to 68 (SSTQTRSSSGS). The segment at 58–190 (SSTQTRSSSG…RRGPSAGGUG (133 aa)) is disordered. Residues 79–120 (RRQEALEASRRRMQEEQDARAAEFREKQRMLEEEKRRQKIEM) show a composition bias toward basic and acidic residues. A compositionally biased stretch (polar residues) spans 136-151 (VAQQNTEEAASSSSLR). Position 189 (U189) is a non-standard amino acid, selenocysteine.

It belongs to the selenoprotein S family.

Its subcellular location is the endoplasmic reticulum membrane. It localises to the cytoplasm. Involved in the degradation process of misfolded endoplasmic reticulum (ER) luminal proteins. Participates in the transfer of misfolded proteins from the ER to the cytosol, where they are destroyed by the proteasome in a ubiquitin-dependent manner. The protein is Selenoprotein S (vimp) of Danio rerio (Zebrafish).